Consider the following 1016-residue polypeptide: DNA polymerase I (1016 aa).

Residues 1 to 308 (MPNSIWTSSD…MEFTTLTRRV (308 aa)) enclose the 5'-3' exonuclease domain. The disordered stretch occupies residues 334–361 (GPDLDAAEPEPVAGGIPEVSGESVPMPP). The 3'-5' exonuclease domain maps to 394-630 (SAYVTIRDLV…MEARGITVDR (237 aa)). Residues 768 to 1016 (GRKIRTAFIS…RAATNWDEAH (249 aa)) are polymerase.

The protein belongs to the DNA polymerase type-A family. Single-chain monomer with multiple functions.

It catalyses the reaction DNA(n) + a 2'-deoxyribonucleoside 5'-triphosphate = DNA(n+1) + diphosphate. Its function is as follows. In addition to polymerase activity, this DNA polymerase exhibits 3'-5' and 5'-3' exonuclease activity. In Rhizobium leguminosarum, this protein is DNA polymerase I (polA).